Here is a 260-residue protein sequence, read N- to C-terminus: UPF0246 protein Bphyt_1375 (260 aa).

This sequence belongs to the UPF0246 family.

This is UPF0246 protein Bphyt_1375 from Paraburkholderia phytofirmans (strain DSM 17436 / LMG 22146 / PsJN) (Burkholderia phytofirmans).